The following is a 541-amino-acid chain: Copper transport protein CutJ (541 aa).

The N-terminal stretch at 1–25 (MKRNRWWIILLLFLVFLPKTSFAHA) is a signal peptide. 2 residues coordinate Cu cation: His24 and His110. 8 helical membrane passes run 146–166 (AILY…LFWY), 180–200 (ILTG…PIQT), 228–248 (SIWI…IPAI), 262–282 (PLIF…AAVV), 293–313 (FLHL…VLLL), 335–355 (WALT…FFII), 370–390 (LLVK…HFLL), and 407–427 (WAIG…PSPP).

In the N-terminal section; belongs to the CopC family. It in the C-terminal section; belongs to the CopD family.

The protein localises to the cell membrane. Functionally, involved in uptake of extracellular oxidized copper under copper-limiting conditions. The polypeptide is Copper transport protein CutJ (Bacillus subtilis (strain 168)).